The primary structure comprises 455 residues: Probable galactarate/D-glucarate transporter GudP (455 aa).

The next 12 membrane-spanning stretches (helical) occupy residues 19–39, 59–79, 87–107, 108–128, 153–173, 177–197, 253–273, 289–309, 320–340, 348–368, 386–406, and 414–434; these read WFIV…RATL, YVFS…GWLL, IIAL…AIGF, FSAG…GLSE, AFFN…MGWL, FGWH…AVIW, IGVY…LTWF, GFVA…GGIV, LTFA…SMIV, WLVV…ALGW, LFNT…GYIV, and GALV…LLLV.

The protein belongs to the major facilitator superfamily. Phthalate permease family.

The protein resides in the cell membrane. The catalysed reaction is galactarate(in) + H(+)(in) = galactarate(out) + H(+)(out). It catalyses the reaction D-glucarate(in) + H(+)(in) = D-glucarate(out) + H(+)(out). In terms of biological role, probably involved in the uptake of galactarate and/or D-glucarate. In Bacillus subtilis (strain 168), this protein is Probable galactarate/D-glucarate transporter GudP.